A 2925-amino-acid chain; its full sequence is Otogelin (2925 aa).

The first 25 residues, methionine 1–serine 25, serve as a signal peptide directing secretion. The tract at residues glycine 39 to glutamate 69 is disordered. Over residues proline 56 to glutamate 69 the composition is skewed to polar residues. Residues histidine 102–glutamine 139 enclose the EGF-like domain. Intrachain disulfides connect cysteine 106-cysteine 120, cysteine 114-cysteine 126, cysteine 128-cysteine 138, cysteine 152-cysteine 285, and cysteine 199-cysteine 206. In terms of domain architecture, VWFD 1 spans serine 150 to proline 322. Residues glutamate 316 to cysteine 335 form a disordered region. Polar residues predominate over residues threonine 326–cysteine 335. The 177-residue stretch at alanine 512 to serine 688 folds into the VWFD 2 domain. 3 disulfide bridges follow: cysteine 514-cysteine 652, cysteine 536-cysteine 687, and cysteine 558-cysteine 566. One can recognise a TIL domain in the interval cysteine 780 to cysteine 844. N-linked (GlcNAc...) asparagine glycosylation is present at asparagine 914. The VWFD 3 domain occupies serine 984–threonine 1152. 2 cysteine pairs are disulfide-bonded: cysteine 986–cysteine 1115 and cysteine 1030–cysteine 1037. The disordered stretch occupies residues leucine 1476–threonine 1540. The N-linked (GlcNAc...) asparagine glycan is linked to asparagine 1478. The segment covering proline 1502–threonine 1528 has biased composition (low complexity). An N-linked (GlcNAc...) asparagine glycan is attached at asparagine 1612. Disordered stretches follow at residues glycine 1636–valine 1679, valine 1693–alanine 1715, and lysine 1737–serine 1788. The segment covering serine 1650–proline 1659 has biased composition (polar residues). Residues proline 1694–proline 1708 are compositionally biased toward low complexity. The span at serine 1751 to proline 1764 shows a compositional bias: pro residues. The VWFD 4 domain maps to cysteine 2110–serine 2289. Cystine bridges form between cysteine 2112–cysteine 2249, cysteine 2840–cysteine 2889, cysteine 2854–cysteine 2903, cysteine 2865–cysteine 2920, and cysteine 2869–cysteine 2922. A CTCK domain is found at cysteine 2840–serine 2925.

Belongs to the otogelin family. Post-translationally, N-glycosylated. Not O-glycosylated.

The protein resides in the apical cell membrane. Its subcellular location is the secreted. It localises to the extracellular space. Functionally, glycoprotein specific to acellular membranes of the inner ear. May be required for the anchoring of the otoconial membranes and cupulae to the underlying neuroepithelia in the vestibule. May be involved in the organization and/or stabilization of the fibrillar network that compose the tectorial membrane in the cochlea. May play a role in mechanotransduction processes. The chain is Otogelin (OTOG) from Homo sapiens (Human).